The primary structure comprises 110 residues: U1-lycotoxin-Ls1hh (110 aa).

Residues 1-20 form the signal peptide; that stretch reads MKFVLLFGVLLVTLFSYSSA. The propeptide occupies 21 to 44; sequence EMLDDFDQADEDELLSLIEKEEAR. Cystine bridges form between Cys-47–Cys-62, Cys-54–Cys-71, Cys-61–Cys-89, and Cys-73–Cys-87.

The protein belongs to the neurotoxin 19 (CSTX) family. 03 subfamily. As to expression, expressed by the venom gland.

The protein resides in the secreted. This chain is U1-lycotoxin-Ls1hh, found in Lycosa singoriensis (Wolf spider).